Consider the following 871-residue polypeptide: Protein TIC 100 (871 aa).

The tract at residues 1 to 85 (MANEELTESQ…NANPETNIRR (85 aa)) is disordered. The segment covering 8–20 (ESQQQEDPSQQLP) has biased composition (polar residues). Residues 30–46 (SDSNSDSDASSQSSGDD) are compositionally biased toward low complexity. MORN repeat units lie at residues 219-239 (YEGT…AENG), 243-257 (YEGE…GHGV), and 337-352 (YAGQ…CGVY). Asparagine 238 carries the post-translational modification Deamidated asparagine. Residues 587-647 (MLDGLEKWTE…QEEEKKTEMG (61 aa)) adopt a coiled-coil conformation. Disordered stretches follow at residues 631–654 (EELK…EDED) and 669–721 (KEKI…NSPF). Positions 632-645 (ELKKKEQEEEKKTE) are enriched in basic and acidic residues. Threonine 649 carries the post-translational modification Phosphothreonine. Over residues 669 to 683 (KEKIQENKQEEKYKD) the composition is skewed to basic and acidic residues. The span at 684–704 (DDDEDDDDGDDDDDDDDDDDL) shows a compositional bias: acidic residues.

As to quaternary structure, part of the Tic complex. Component of the 1-MD complex, composed of TIC20-I, TIC214, TIC100 and TIC56. Interacts with the translocating preproteins. Hydrolysis of ATP is essential for the formation of this complex. The 1-MD complex interacts with TIC21. Preferentially expressed in ovules, and moderately expressed in leaves and siliques.

The protein localises to the plastid. It is found in the chloroplast inner membrane. Its function is as follows. Involved in protein precursor import into chloroplasts. May be part of an intermediate translocation complex acting as a protein-conducting channel at the inner envelope. Plays an important role during embryogenesis and chloroplast biogenesis. The chain is Protein TIC 100 from Arabidopsis thaliana (Mouse-ear cress).